The sequence spans 233 residues: Probable GTP-binding protein EngB (233 aa).

In terms of domain architecture, EngB-type G spans 23 to 209 (AVPEVAFAGR…QRIVAGWLCL (187 aa)). GTP-binding positions include 31 to 38 (GRSNAGKS), 58 to 62 (GRTQH), 82 to 85 (DLPG), 149 to 152 (TKAD), and 188 to 190 (FSS). Positions 38 and 60 each coordinate Mg(2+).

The protein belongs to the TRAFAC class TrmE-Era-EngA-EngB-Septin-like GTPase superfamily. EngB GTPase family. Mg(2+) serves as cofactor.

Its function is as follows. Necessary for normal cell division and for the maintenance of normal septation. The chain is Probable GTP-binding protein EngB from Ralstonia pickettii (strain 12J).